The sequence spans 349 residues: Protein disulfide isomerase Creld2 (349 aa).

Residues 1 to 22 form the signal peptide; that stretch reads MHLLLAAGFGLLLLLLPPPAAS. The CXXC motif lies at 28–31; that stretch reads CQRC. Disulfide bonds link cysteine 28–cysteine 31, cysteine 137–cysteine 151, cysteine 145–cysteine 163, and cysteine 165–cysteine 174. The 43-residue stretch at 133-175 folds into the EGF-like 1 domain; the sequence is DCKECQGGSERPCSGNGYCSGDGSRQGDGSCQCHAGYKGPLCI. An N-linked (GlcNAc...) asparagine glycan is attached at asparagine 187. The FU 1 repeat unit spans residues 190-237; sequence HSICLACDESCKTCSGPSNKDCVQCEVGWARVEDACVDVDECAAETPP. The N-linked (GlcNAc...) asparagine glycan is linked to asparagine 248. Residues 250–297 form an FU 2 repeat; sequence SYICEECDSTCVGCTGKGPANCKECIAGYTKQSGQCADIDECSLEEKA. Residues 260–263 carry the CXXC motif; the sequence is CVGC. Intrachain disulfides connect cysteine 260-cysteine 263, cysteine 291-cysteine 305, cysteine 298-cysteine 314, and cysteine 316-cysteine 327. Residues 287–328 enclose the EGF-like 2; calcium-binding domain; it reads DIDECSLEEKACKRRNENCYNVPGSFVCVCPDGFEETEDACV.

Belongs to the CRELD family. In terms of assembly, interacts with Chrna4. Component of a complex containing at least Creld2, Manf, Matn3 and Pdia4. As to expression, broadly expressed in brain (at protein level).

The protein localises to the endoplasmic reticulum. The catalysed reaction is Catalyzes the rearrangement of -S-S- bonds in proteins.. Protein disulfide isomerase. Might play a role in the unfolded protein response. May regulate transport of alpha4-beta2 neuronal acetylcholine receptor. The sequence is that of Protein disulfide isomerase Creld2 (Creld2) from Rattus norvegicus (Rat).